A 263-amino-acid chain; its full sequence is 5'-nucleotidase SurE (263 aa).

A divalent metal cation contacts are provided by Asp8, Asp9, Ser40, and Asn93.

This sequence belongs to the SurE nucleotidase family. Requires a divalent metal cation as cofactor.

It localises to the cytoplasm. It catalyses the reaction a ribonucleoside 5'-phosphate + H2O = a ribonucleoside + phosphate. Functionally, nucleotidase that shows phosphatase activity on nucleoside 5'-monophosphates. The sequence is that of 5'-nucleotidase SurE from Beijerinckia indica subsp. indica (strain ATCC 9039 / DSM 1715 / NCIMB 8712).